The chain runs to 325 residues: Biotin synthase (325 aa).

The Radical SAM core domain occupies 51 to 280 (FMGRKADLCT…NVYIRYAGGR (230 aa)). 3 residues coordinate [4Fe-4S] cluster: C69, C73, and C76. [2Fe-2S] cluster-binding residues include S113, C145, C205, and R275.

The protein belongs to the radical SAM superfamily. Biotin synthase family. As to quaternary structure, homodimer. [4Fe-4S] cluster serves as cofactor. The cofactor is [2Fe-2S] cluster.

The catalysed reaction is (4R,5S)-dethiobiotin + (sulfur carrier)-SH + 2 reduced [2Fe-2S]-[ferredoxin] + 2 S-adenosyl-L-methionine = (sulfur carrier)-H + biotin + 2 5'-deoxyadenosine + 2 L-methionine + 2 oxidized [2Fe-2S]-[ferredoxin]. Its pathway is cofactor biosynthesis; biotin biosynthesis; biotin from 7,8-diaminononanoate: step 2/2. Functionally, catalyzes the conversion of dethiobiotin (DTB) to biotin by the insertion of a sulfur atom into dethiobiotin via a radical-based mechanism. The chain is Biotin synthase from Clostridioides difficile (strain 630) (Peptoclostridium difficile).